Reading from the N-terminus, the 1554-residue chain is Myosin-2 (1554 aa).

In terms of domain architecture, Myosin N-terminal SH3-like spans 4-57 (EVGTRCWYPDKQQGWIGGEITKHTNLSNKHQLELTLEDNQIVEIESETLDETKD). Residues 70-774 (EATEDLTSLS…MLAYLEKLRS (705 aa)) form the Myosin motor domain. 164-171 (GESGAGKT) is an ATP binding site. Residues 443–523 (FIGVLDIYGF…LGILSLLDEE (81 aa)) are actin-binding. IQ domains are found at residues 778–798 (HNSS…KKYL), 800–824 (IISS…DLEF), 825–847 (KTQA…KTIS), 848–872 (LLSA…LQRR), 873–895 (QRDA…SFNT), and 896–925 (TRRS…EAKS). Residues 926–1079 (VNHLKEVSYK…IARLQAAVRS (154 aa)) adopt a coiled-coil conformation. The tract at residues 1080–1554 (GVTSSTITST…VTVQESQRTE (475 aa)) is non alpha-helical, tail domain. A compositionally biased stretch (low complexity) spans 1082-1093 (TSSTITSTPTAS). The interval 1082 to 1109 (TSSTITSTPTASRRFSAHSSVADGTSPR) is disordered. Over residues 1098–1109 (AHSSVADGTSPR) the composition is skewed to polar residues. One can recognise a Dilute domain in the interval 1205–1480 (AEVLSTIQKL…LNFVADRVKK (276 aa)).

This sequence belongs to the TRAFAC class myosin-kinesin ATPase superfamily. Myosin family. As to quaternary structure, homodimer. Interacts with calmodulin (CMD1) and the myosin light chain MLC1 through its IQ repeats.

In terms of biological role, myosin heavy chain that is required for the cell cycle-regulated transport of various organelles and proteins for their segregation. Functions by binding with its tail domain to receptor proteins on organelles and exerting force with its N-terminal motor domain against actin filaments, thereby transporting its cargo along polarized actin cables. The polypeptide is Myosin-2 (MYO2) (Lachancea kluyveri (strain ATCC 58438 / CBS 3082 / BCRC 21498 / NBRC 1685 / JCM 7257 / NCYC 543 / NRRL Y-12651) (Yeast)).